A 119-amino-acid chain; its full sequence is Large ribosomal subunit protein uL22 (119 aa).

Belongs to the universal ribosomal protein uL22 family. In terms of assembly, part of the 50S ribosomal subunit.

Its function is as follows. This protein binds specifically to 23S rRNA; its binding is stimulated by other ribosomal proteins, e.g. L4, L17, and L20. It is important during the early stages of 50S assembly. It makes multiple contacts with different domains of the 23S rRNA in the assembled 50S subunit and ribosome. The globular domain of the protein is located near the polypeptide exit tunnel on the outside of the subunit, while an extended beta-hairpin is found that lines the wall of the exit tunnel in the center of the 70S ribosome. The chain is Large ribosomal subunit protein uL22 from Chlorobium luteolum (strain DSM 273 / BCRC 81028 / 2530) (Pelodictyon luteolum).